Here is an 876-residue protein sequence, read N- to C-terminus: GATOR2 complex protein MIOS (876 aa).

WD repeat units lie at residues 59–101 (SDTP…NSKS), 112–156 (KHAR…SPEA), 182–222 (GQND…QKTF), 224–262 (NTKAIQGVTVDPHFQDRVASYFEGQVAIWDLRKFEKPVF), 266–307 (EQPK…MPFG), and 400–440 (RAQS…KQYT). The C4-type zinc-finger motif lies at 738–784 (VSCNFCGKSISYSCSAMPHQGRGFSQYGVSGSPTKSKVTSCPGCRKP). Residues C740, C743, C778, C781, C791, C830, C833, H835, H838, H841, C852, C857, and C861 each coordinate Zn(2+). An RING-type; atypical zinc finger spans residues 785–866 (LPRCALCLMN…CTCKCMQLDT (82 aa)).

This sequence belongs to the WD repeat mio family. As to quaternary structure, component of the GATOR2 subcomplex, composed of MIOS, SEC13, SEH1L, WDR24 and WDR59. The GATOR2 complex interacts with CASTOR1 and CASTOR2; the interaction is negatively regulated by arginine. The GATOR2 complex interacts with SESN1, SESN2 and SESN3; the interaction is negatively regulated by amino acids. Interacts with SAR1; the interaction is direct, disrupted by leucine and mediates the interaction of SAR1 with the GATOR2 complex to negatively regulate the TORC1 signaling upon leucine deprivation.

The protein resides in the lysosome membrane. The GATOR2 complex is negatively regulated by the upstream amino acid sensors CASTOR1 and SESN2, which sequester the GATOR2 complex in absence of amino acids. In the presence of abundant amino acids, GATOR2 is released from CASTOR1 and SESN2 and activated. As a component of the GATOR2 complex, functions as an activator of the amino acid-sensing branch of the mTORC1 signaling pathway. The GATOR2 complex indirectly activates mTORC1 through the inhibition of the GATOR1 subcomplex. GATOR2 probably acts as an E3 ubiquitin-protein ligase toward GATOR1. In the presence of abundant amino acids, the GATOR2 complex mediates ubiquitination of the NPRL2 core component of the GATOR1 complex, leading to GATOR1 inactivation. In the absence of amino acids, GATOR2 is inhibited, activating the GATOR1 complex. Within the GATOR2 complex, MIOS is required to prevent autoubiquitination of WDR24, the catalytic subunit of the complex. This Danio rerio (Zebrafish) protein is GATOR2 complex protein MIOS.